Reading from the N-terminus, the 633-residue chain is Acetylcholinesterase (633 aa).

An N-terminal signal peptide occupies residues 1–23 (MKILDALLFPVIFIMFFIHLSIA). A disulfide bridge connects residues Cys91 and Cys118. Residues Asn133 and Asn184 are each glycosylated (N-linked (GlcNAc...) asparagine). Ser225 functions as the Acyl-ester intermediate in the catalytic mechanism. Cys279 and Cys290 are oxidised to a cystine. An N-linked (GlcNAc...) asparagine glycan is attached at Asn283. Catalysis depends on Glu352, which acts as the Charge relay system. The N-linked (GlcNAc...) asparagine glycan is linked to Asn368. A disulfide bond links Cys427 and Cys579. Catalysis depends on His494, which acts as the Charge relay system. N-linked (GlcNAc...) asparagine glycosylation is found at Asn511 and Asn591.

It belongs to the type-B carboxylesterase/lipase family.

The protein resides in the synapse. It localises to the secreted. Its subcellular location is the cell membrane. It carries out the reaction acetylcholine + H2O = choline + acetate + H(+). Functionally, terminates signal transduction at the neuromuscular junction by rapid hydrolysis of the acetylcholine released into the synaptic cleft. In Electrophorus electricus (Electric eel), this protein is Acetylcholinesterase (ache).